The primary structure comprises 180 residues: Ribulose bisphosphate carboxylase small subunit, chloroplastic 3 (180 aa).

A chloroplast-targeting transit peptide spans 1–56 (MASMISSSAVTTVSRASTVQSAAVAPFGGLKSMTGFPVKKVNTDITSITSNGGRVK).

Belongs to the RuBisCO small chain family. In terms of assembly, heterohexadecamer of 8 large and 8 small subunits.

Its subcellular location is the plastid. The protein localises to the chloroplast. In terms of biological role, ruBisCO catalyzes two reactions: the carboxylation of D-ribulose 1,5-bisphosphate, the primary event in carbon dioxide fixation, as well as the oxidative fragmentation of the pentose substrate. Both reactions occur simultaneously and in competition at the same active site. Although the small subunit is not catalytic it is essential for maximal activity. Binds to abscisic acid (ABA); only half of the possible binding sites are occupied in the crystal; and there are indications this is a low affinity site. This is Ribulose bisphosphate carboxylase small subunit, chloroplastic 3 (RBCS.3A) from Pisum sativum (Garden pea).